Here is a 674-residue protein sequence, read N- to C-terminus: UvrABC system protein B (674 aa).

Residues 26–183 (EGLEDGLAHQ…RRLAELQYTR (158 aa)) form the Helicase ATP-binding domain. ATP is bound at residue 39 to 46 (GVTGSGKT). The Beta-hairpin signature appears at 92-115 (YYDYYQPEAYVPSSDTFIEKDASV). In terms of domain architecture, Helicase C-terminal spans 431–597 (QVDDLLSEIR…GLNKKISDIL (167 aa)). One can recognise a UVR domain in the interval 634-669 (QKRIHQLEAQMQQHAQNLEFEEAAQVRDQLHQVREL).

Belongs to the UvrB family. Forms a heterotetramer with UvrA during the search for lesions. Interacts with UvrC in an incision complex.

Its subcellular location is the cytoplasm. Functionally, the UvrABC repair system catalyzes the recognition and processing of DNA lesions. A damage recognition complex composed of 2 UvrA and 2 UvrB subunits scans DNA for abnormalities. Upon binding of the UvrA(2)B(2) complex to a putative damaged site, the DNA wraps around one UvrB monomer. DNA wrap is dependent on ATP binding by UvrB and probably causes local melting of the DNA helix, facilitating insertion of UvrB beta-hairpin between the DNA strands. Then UvrB probes one DNA strand for the presence of a lesion. If a lesion is found the UvrA subunits dissociate and the UvrB-DNA preincision complex is formed. This complex is subsequently bound by UvrC and the second UvrB is released. If no lesion is found, the DNA wraps around the other UvrB subunit that will check the other stand for damage. The sequence is that of UvrABC system protein B from Erwinia tasmaniensis (strain DSM 17950 / CFBP 7177 / CIP 109463 / NCPPB 4357 / Et1/99).